Here is a 205-residue protein sequence, read N- to C-terminus: Recombination protein RecR (205 aa).

Residues 60-75 (CKVCHNISDTETCQIC) form a C4-type zinc finger. The Toprim domain maps to 83-178 (SMVCVVENIR…KLSVLARGVS (96 aa)).

The protein belongs to the RecR family.

In terms of biological role, may play a role in DNA repair. It seems to be involved in an RecBC-independent recombinational process of DNA repair. It may act with RecF and RecO. The protein is Recombination protein RecR of Bacteroides fragilis (strain ATCC 25285 / DSM 2151 / CCUG 4856 / JCM 11019 / LMG 10263 / NCTC 9343 / Onslow / VPI 2553 / EN-2).